The chain runs to 609 residues: Ataxin-10 homolog (609 aa).

Disordered regions lie at residues 265–293 (KSTT…TTTG), 405–426 (KQQE…SKDS), and 461–490 (SDTN…KGFN). Residues 266–292 (STTESTTESTTTESTDSTTDSTTTTTT) are compositionally biased toward low complexity. Positions 466-479 (SSSSSSSSSSSTTT) are enriched in low complexity. Residues 480–490 (DGETVTSKGFN) show a composition bias toward polar residues.

The protein belongs to the ATXN10 family.

In terms of biological role, may play a role in the regulation of cytokinesis. This is Ataxin-10 homolog (atxn10) from Dictyostelium discoideum (Social amoeba).